The sequence spans 1438 residues: DNA-directed RNA polymerase subunit beta' (1438 aa).

Zn(2+) is bound by residues cysteine 72, cysteine 74, cysteine 87, and cysteine 90. Mg(2+)-binding residues include aspartate 483, aspartate 485, and aspartate 487. Zn(2+)-binding residues include cysteine 831, cysteine 905, cysteine 912, and cysteine 915.

Belongs to the RNA polymerase beta' chain family. As to quaternary structure, the RNAP catalytic core consists of 2 alpha, 1 beta, 1 beta' and 1 omega subunit. When a sigma factor is associated with the core the holoenzyme is formed, which can initiate transcription. It depends on Mg(2+) as a cofactor. Zn(2+) is required as a cofactor.

The catalysed reaction is RNA(n) + a ribonucleoside 5'-triphosphate = RNA(n+1) + diphosphate. Functionally, DNA-dependent RNA polymerase catalyzes the transcription of DNA into RNA using the four ribonucleoside triphosphates as substrates. This is DNA-directed RNA polymerase subunit beta' from Flavobacterium psychrophilum (strain ATCC 49511 / DSM 21280 / CIP 103535 / JIP02/86).